Consider the following 891-residue polypeptide: DNA mismatch repair protein MutS (891 aa).

646–653 contributes to the ATP binding site; the sequence is GPNMAGKS.

Belongs to the DNA mismatch repair MutS family.

Functionally, this protein is involved in the repair of mismatches in DNA. It is possible that it carries out the mismatch recognition step. This protein has a weak ATPase activity. The chain is DNA mismatch repair protein MutS from Rickettsia canadensis (strain McKiel).